The primary structure comprises 287 residues: Ribonuclease Z (287 aa).

Zn(2+) contacts are provided by H64, H66, D68, H69, H124, D191, and H250. The active-site Proton acceptor is D68.

This sequence belongs to the RNase Z family. In terms of assembly, homodimer. Requires Zn(2+) as cofactor.

It catalyses the reaction Endonucleolytic cleavage of RNA, removing extra 3' nucleotides from tRNA precursor, generating 3' termini of tRNAs. A 3'-hydroxy group is left at the tRNA terminus and a 5'-phosphoryl group is left at the trailer molecule.. Functionally, zinc phosphodiesterase, which displays some tRNA 3'-processing endonuclease activity. Probably involved in tRNA maturation, by removing a 3'-trailer from precursor tRNA. In Pyrobaculum arsenaticum (strain DSM 13514 / JCM 11321 / PZ6), this protein is Ribonuclease Z.